Consider the following 185-residue polypeptide: Putative manganese efflux pump MntP (185 aa).

A run of 6 helical transmembrane segments spans residues 6–26 (IFII…ACGL), 41–61 (FHFG…GLTV), 65–85 (VETY…GKMI), 107–127 (LVFL…SFSI), 132–152 (IAFP…FGLW), and 164–184 (SHIA…KLLL).

This sequence belongs to the MntP (TC 9.B.29) family.

It localises to the cell inner membrane. In terms of biological role, probably functions as a manganese efflux pump. The polypeptide is Putative manganese efflux pump MntP (Maridesulfovibrio salexigens (strain ATCC 14822 / DSM 2638 / NCIMB 8403 / VKM B-1763) (Desulfovibrio salexigens)).